We begin with the raw amino-acid sequence, 297 residues long: uncharacterized protein (297 aa).

Residue glutamate 46 is part of the active site.

The protein belongs to the PhzF family. In terms of assembly, homodimer and homotetramer.

This is an uncharacterized protein from Escherichia coli (strain K12).